The chain runs to 644 residues: Threonine--tRNA ligase (644 aa).

One can recognise a TGS domain in the interval 1–61 (MVAITLPDGS…AHDAKVEIVT (61 aa)). A catalytic region spans residues 242 to 533 (DHRKIGKALN…LIENYAGWMP (292 aa)). Zn(2+) contacts are provided by C333, H384, and H510.

This sequence belongs to the class-II aminoacyl-tRNA synthetase family. As to quaternary structure, homodimer. Zn(2+) serves as cofactor.

It localises to the cytoplasm. The catalysed reaction is tRNA(Thr) + L-threonine + ATP = L-threonyl-tRNA(Thr) + AMP + diphosphate + H(+). Catalyzes the attachment of threonine to tRNA(Thr) in a two-step reaction: L-threonine is first activated by ATP to form Thr-AMP and then transferred to the acceptor end of tRNA(Thr). Also edits incorrectly charged L-seryl-tRNA(Thr). The protein is Threonine--tRNA ligase of Psychrobacter cryohalolentis (strain ATCC BAA-1226 / DSM 17306 / VKM B-2378 / K5).